Reading from the N-terminus, the 490-residue chain is GTPase Der (490 aa).

2 consecutive EngA-type G domains span residues 3–166 (PVVA…AEAM) and 200–373 (IKLA…DSAT). Residues 9–16 (GRPNVGKS), 56–60 (DTGGI), 118–121 (NKVD), 206–213 (GKPNVGKS), 253–257 (DTAGV), and 318–321 (NKWD) contribute to the GTP site. A KH-like domain is found at 374 to 458 (RRVSTSMLTR…PIQIRFQDGG (85 aa)).

This sequence belongs to the TRAFAC class TrmE-Era-EngA-EngB-Septin-like GTPase superfamily. EngA (Der) GTPase family. In terms of assembly, associates with the 50S ribosomal subunit.

Functionally, GTPase that plays an essential role in the late steps of ribosome biogenesis. In Shewanella piezotolerans (strain WP3 / JCM 13877), this protein is GTPase Der.